A 416-amino-acid polypeptide reads, in one-letter code: Gamma-glutamyl phosphate reductase (416 aa).

This sequence belongs to the gamma-glutamyl phosphate reductase family.

The protein resides in the cytoplasm. The enzyme catalyses L-glutamate 5-semialdehyde + phosphate + NADP(+) = L-glutamyl 5-phosphate + NADPH + H(+). It functions in the pathway amino-acid biosynthesis; L-proline biosynthesis; L-glutamate 5-semialdehyde from L-glutamate: step 2/2. Functionally, catalyzes the NADPH-dependent reduction of L-glutamate 5-phosphate into L-glutamate 5-semialdehyde and phosphate. The product spontaneously undergoes cyclization to form 1-pyrroline-5-carboxylate. The polypeptide is Gamma-glutamyl phosphate reductase (Salmonella paratyphi C (strain RKS4594)).